A 247-amino-acid chain; its full sequence is Hydroxyacylglutathione hydrolase 1 (247 aa).

Zn(2+)-binding residues include His-54, His-56, Asp-58, His-59, His-111, Asp-128, and His-165.

It belongs to the metallo-beta-lactamase superfamily. Glyoxalase II family. As to quaternary structure, monomer. Requires Zn(2+) as cofactor.

It carries out the reaction an S-(2-hydroxyacyl)glutathione + H2O = a 2-hydroxy carboxylate + glutathione + H(+). It functions in the pathway secondary metabolite metabolism; methylglyoxal degradation; (R)-lactate from methylglyoxal: step 2/2. Its function is as follows. Thiolesterase that catalyzes the hydrolysis of S-D-lactoyl-glutathione to form glutathione and D-lactic acid. The sequence is that of Hydroxyacylglutathione hydrolase 1 from Vibrio vulnificus (strain YJ016).